The sequence spans 167 residues: Translation initiation factor IF-3 (167 aa).

The protein belongs to the IF-3 family. Monomer.

It localises to the cytoplasm. Functionally, IF-3 binds to the 30S ribosomal subunit and shifts the equilibrium between 70S ribosomes and their 50S and 30S subunits in favor of the free subunits, thus enhancing the availability of 30S subunits on which protein synthesis initiation begins. The chain is Translation initiation factor IF-3 from Bacillus cereus (strain ATCC 14579 / DSM 31 / CCUG 7414 / JCM 2152 / NBRC 15305 / NCIMB 9373 / NCTC 2599 / NRRL B-3711).